A 191-amino-acid chain; its full sequence is UPF0312 protein SO_3370 (191 aa).

The first 22 residues, 1–22, serve as a signal peptide directing secretion; the sequence is MKKQLFSALIGASLFAPMAVSA.

Belongs to the UPF0312 family. Type 1 subfamily.

It localises to the periplasm. This chain is UPF0312 protein SO_3370, found in Shewanella oneidensis (strain ATCC 700550 / JCM 31522 / CIP 106686 / LMG 19005 / NCIMB 14063 / MR-1).